Consider the following 51-residue polypeptide: Large ribosomal subunit protein eL39 (51 aa).

This sequence belongs to the eukaryotic ribosomal protein eL39 family.

In Methanobrevibacter smithii (strain ATCC 35061 / DSM 861 / OCM 144 / PS), this protein is Large ribosomal subunit protein eL39.